The sequence spans 200 residues: Dephospho-CoA kinase (200 aa).

Positions 4 to 200 constitute a DPCK domain; that stretch reads TIGLTGSVAT…TFIERFVNNK (197 aa). 12–17 provides a ligand contact to ATP; the sequence is ATGKST.

This sequence belongs to the CoaE family.

It localises to the cytoplasm. It catalyses the reaction 3'-dephospho-CoA + ATP = ADP + CoA + H(+). It participates in cofactor biosynthesis; coenzyme A biosynthesis; CoA from (R)-pantothenate: step 5/5. Its function is as follows. Catalyzes the phosphorylation of the 3'-hydroxyl group of dephosphocoenzyme A to form coenzyme A. The chain is Dephospho-CoA kinase from Listeria innocua serovar 6a (strain ATCC BAA-680 / CLIP 11262).